The chain runs to 212 residues: Large ribosomal subunit protein uL1 (212 aa).

Belongs to the universal ribosomal protein uL1 family. Part of the 50S ribosomal subunit.

Binds directly to 23S rRNA. Probably involved in E site tRNA release. Its function is as follows. Protein L1 is also a translational repressor protein, it controls the translation of its operon by binding to its mRNA. The polypeptide is Large ribosomal subunit protein uL1 (Methanothermobacter thermautotrophicus (strain ATCC 29096 / DSM 1053 / JCM 10044 / NBRC 100330 / Delta H) (Methanobacterium thermoautotrophicum)).